Here is a 158-residue protein sequence, read N- to C-terminus: 2-C-methyl-D-erythritol 2,4-cyclodiphosphate synthase (158 aa).

Positions 9 and 11 each coordinate a divalent metal cation. Residues 9–11 (DVH) and 35–36 (HS) contribute to the 4-CDP-2-C-methyl-D-erythritol 2-phosphate site. H43 lines the a divalent metal cation pocket. Residues 57 to 59 (DIG), 62 to 66 (FPDTD), 101 to 107 (AQKPKMA), 133 to 136 (TTTE), F140, and R143 contribute to the 4-CDP-2-C-methyl-D-erythritol 2-phosphate site.

This sequence belongs to the IspF family. Homotrimer. The cofactor is a divalent metal cation.

It catalyses the reaction 4-CDP-2-C-methyl-D-erythritol 2-phosphate = 2-C-methyl-D-erythritol 2,4-cyclic diphosphate + CMP. The protein operates within isoprenoid biosynthesis; isopentenyl diphosphate biosynthesis via DXP pathway; isopentenyl diphosphate from 1-deoxy-D-xylulose 5-phosphate: step 4/6. Its function is as follows. Involved in the biosynthesis of isopentenyl diphosphate (IPP) and dimethylallyl diphosphate (DMAPP), two major building blocks of isoprenoid compounds. Catalyzes the conversion of 4-diphosphocytidyl-2-C-methyl-D-erythritol 2-phosphate (CDP-ME2P) to 2-C-methyl-D-erythritol 2,4-cyclodiphosphate (ME-CPP) with a corresponding release of cytidine 5-monophosphate (CMP). This is 2-C-methyl-D-erythritol 2,4-cyclodiphosphate synthase from Bacillus velezensis (strain DSM 23117 / BGSC 10A6 / LMG 26770 / FZB42) (Bacillus amyloliquefaciens subsp. plantarum).